Reading from the N-terminus, the 532-residue chain is T-complex protein 1 subunit epsilon (532 aa).

This sequence belongs to the TCP-1 chaperonin family. Component of the T-complex protein 1 (TCP1) complex.

The protein resides in the cytoplasm. Its function is as follows. Molecular chaperone; assists the folding of proteins upon ATP hydrolysis. This is T-complex protein 1 subunit epsilon (CCT5) from Encephalitozoon cuniculi (strain GB-M1) (Microsporidian parasite).